The primary structure comprises 201 residues: Potassium-transporting ATPase KdpC subunit (201 aa).

A helical transmembrane segment spans residues 7–27; the sequence is PAIVLLLVLTAITGLAYPLAM.

It belongs to the KdpC family. As to quaternary structure, the system is composed of three essential subunits: KdpA, KdpB and KdpC.

Its subcellular location is the cell inner membrane. In terms of biological role, part of the high-affinity ATP-driven potassium transport (or Kdp) system, which catalyzes the hydrolysis of ATP coupled with the electrogenic transport of potassium into the cytoplasm. This subunit acts as a catalytic chaperone that increases the ATP-binding affinity of the ATP-hydrolyzing subunit KdpB by the formation of a transient KdpB/KdpC/ATP ternary complex. The sequence is that of Potassium-transporting ATPase KdpC subunit from Bradyrhizobium diazoefficiens (strain JCM 10833 / BCRC 13528 / IAM 13628 / NBRC 14792 / USDA 110).